The chain runs to 156 residues: Ribonuclease H (156 aa).

The region spanning 1–142 (MNKQVEIFTD…CDELARQAAE (142 aa)) is the RNase H type-1 domain. Residues Asp-10, Glu-48, Asp-70, and Asp-134 each contribute to the Mg(2+) site. The segment at 135-156 (ELARQAAENPTEDDIGYQPEPQ) is disordered.

Belongs to the RNase H family. In terms of assembly, monomer. Mg(2+) serves as cofactor.

It is found in the cytoplasm. The enzyme catalyses Endonucleolytic cleavage to 5'-phosphomonoester.. Functionally, endonuclease that specifically degrades the RNA of RNA-DNA hybrids. This is Ribonuclease H from Vibrio cholerae serotype O1 (strain M66-2).